The following is a 364-amino-acid chain: D-alanine--D-alanine ligase (364 aa).

Residues Lys145–Gln354 form the ATP-grasp domain. Glu181–Glu236 is an ATP binding site. The Mg(2+) site is built by Asp307, Glu321, and Asn323.

This sequence belongs to the D-alanine--D-alanine ligase family. The cofactor is Mg(2+). Mn(2+) serves as cofactor.

It localises to the cytoplasm. It carries out the reaction 2 D-alanine + ATP = D-alanyl-D-alanine + ADP + phosphate + H(+). It participates in cell wall biogenesis; peptidoglycan biosynthesis. Its function is as follows. Cell wall formation. In Nostoc sp. (strain PCC 7120 / SAG 25.82 / UTEX 2576), this protein is D-alanine--D-alanine ligase.